A 292-amino-acid chain; its full sequence is 4-hydroxy-tetrahydrodipicolinate synthase (292 aa).

Pyruvate is bound at residue Thr45. Tyr133 acts as the Proton donor/acceptor in catalysis. Catalysis depends on Lys161, which acts as the Schiff-base intermediate with substrate. Ile203 contributes to the pyruvate binding site.

This sequence belongs to the DapA family. In terms of assembly, homotetramer; dimer of dimers.

Its subcellular location is the cytoplasm. The catalysed reaction is L-aspartate 4-semialdehyde + pyruvate = (2S,4S)-4-hydroxy-2,3,4,5-tetrahydrodipicolinate + H2O + H(+). The protein operates within amino-acid biosynthesis; L-lysine biosynthesis via DAP pathway; (S)-tetrahydrodipicolinate from L-aspartate: step 3/4. Functionally, catalyzes the condensation of (S)-aspartate-beta-semialdehyde [(S)-ASA] and pyruvate to 4-hydroxy-tetrahydrodipicolinate (HTPA). The protein is 4-hydroxy-tetrahydrodipicolinate synthase of Sodalis glossinidius (strain morsitans).